The sequence spans 967 residues: Dolichyl-phosphooligosaccharide-protein glycotransferase 1 (967 aa).

The Cytoplasmic segment spans residues 1–21; that stretch reads MVKTQIKEKKKDEKVTIPLPG. A helical transmembrane segment spans residues 22–42; sequence KIKTVLAFLVVLAFAAYGFYI. At 43-112 the chain is on the extracellular side; sequence RHLTAGKYFS…ISIFGYNELE (70 aa). A DXD motif 1 motif is present at residues 53-55; the sequence is DPD. Mn(2+) is bound at residue Asp-55. Residues 113–133 traverse the membrane as a helical segment; it reads AFLLWPPFVGFLSVIGVYLLG. The Cytoplasmic segment spans residues 134–135; it reads RK. Residues 136–156 form a helical membrane-spanning segment; sequence VLNEWAGMWGAIILSVLTANF. At 157-165 the chain is on the extracellular side; it reads SRTFSGNAR. Mn(2+) is bound by residues Arg-165 and Asp-167. Positions 165–167 match the DXD motif 2 motif; that stretch reads RGD. The chain crosses the membrane as a helical span at residues 166 to 186; sequence GDGPFMMLFTFSAVLMLYYLT. The Cytoplasmic segment spans residues 187-193; it reads EENKNKK. The helical transmembrane segment at 194–214 threads the bilayer; it reads IIWGTLFVLLAGISTAAWNGS. Pro-215 is a topological domain (extracellular). The helical transmembrane segment at 216–236 threads the bilayer; the sequence is FGLMVLLGFASFQTIILFIFG. Over 237-247 the chain is Cytoplasmic; that stretch reads KINELREFIKE. The helical transmembrane segment at 248–268 threads the bilayer; it reads YYPAYLGILAISYLLTIPGIG. Position 269 (Lys-269) is a topological domain, extracellular. Residues 270-290 traverse the membrane as a helical segment; the sequence is IGGFVRFAFEVFLGLVFLAIV. At 291-306 the chain is on the cytoplasmic side; the sequence is MLYGGKYLNYSDKKHR. The helical transmembrane segment at 307-327 threads the bilayer; it reads FAVVAVIVIAGFAGAYIYVGP. Topologically, residues 328-360 are extracellular; it reads KLFTLMGGAYQSTQVYETVQELAKTDWGDVKVY. The TIXE motif signature appears at 345–348; sequence TVQE. The helical transmembrane segment at 361 to 381 threads the bilayer; the sequence is YGVEKPNGIVFFLGLVGAMIV. Residues 382 to 396 are Cytoplasmic-facing; sequence TARYLYKLFKDGRRP. Residues 397–417 traverse the membrane as a helical segment; the sequence is HEELFAITFYVMSIYLLWTAA. Arg-418 is a topological domain (extracellular). Arg-418 provides a ligand contact to a glycophospholipid. Residues 419 to 439 form a helical membrane-spanning segment; that stretch reads FLFLASYAIALMSGVFAGYVL. At 440–453 the chain is on the cytoplasmic side; the sequence is ETVEKMKESIPIKA. The chain crosses the membrane as a helical span at residues 454–474; that stretch reads ALGGVIAIMLLLIPLTHGPLL. At 475 to 967 the chain is on the extracellular side; the sequence is AQSAKSMRTT…LEVSASAPHH (493 aa). The tract at residues 511 to 513 is interacts with target acceptor peptide in protein substrate; that stretch reads WWD. The short motif at 511-515 is the WWDYG motif element; that stretch reads WWDYG. Tyr-516 contacts a glycophospholipid. The short motif at 571–578 is the DK motif element; it reads DWAKFNAI.

The protein belongs to the STT3 family. Mn(2+) is required as a cofactor. It depends on Mg(2+) as a cofactor.

It is found in the cell membrane. The catalysed reaction is an archaeal dolichyl phosphooligosaccharide + [protein]-L-asparagine = an archaeal dolichyl phosphate + a glycoprotein with the oligosaccharide chain attached by N-beta-D-glycosyl linkage to a protein L-asparagine.. The protein operates within protein modification; protein glycosylation. In terms of biological role, oligosaccharyl transferase (OST) that catalyzes the initial transfer of a defined glycan (ManNAcXyl(2)GlcAMan(2)GalNAc in P.furiosus) from the lipid carrier dolichol-monophosphate to an asparagine residue within an Asn-X-Ser/Thr consensus motif in nascent polypeptide chains, the first step in protein N-glycosylation. The sequence is that of Dolichyl-phosphooligosaccharide-protein glycotransferase 1 (aglB1) from Pyrococcus furiosus (strain ATCC 43587 / DSM 3638 / JCM 8422 / Vc1).